Here is an 807-residue protein sequence, read N- to C-terminus: Putative AC transposase (807 aa).

2 disordered regions span residues G42–T140 and M785–P807. The span at Q84–P98 shows a compositional bias: polar residues. 10 tandem repeats follow at residues P109 to Q110, P111 to Q112, P113 to Q114, P115 to Q116, P117 to E118, P119 to Q120, P121 to Q122, P123 to Q124, P125 to E126, and P127 to E128. The interval P109 to E128 is 10 X 2 AA tandem repeats of P-[QE]. The span at Q110–P125 shows a compositional bias: pro residues.

The sequence is that of Putative AC transposase from Zea mays (Maize).